Reading from the N-terminus, the 321-residue chain is Putative membrane-bound redox modulator Alx (321 aa).

The Periplasmic portion of the chain corresponds to 1-6; the sequence is MNTVGT. The helical transmembrane segment at 7–27 threads the bilayer; the sequence is PLLWGGFAVVVAIMLAIDLLL. At 28–43 the chain is on the cytoplasmic side; that stretch reads QGRRGAHAMTMKQAAA. Residues 44 to 64 traverse the membrane as a helical segment; the sequence is WSLVWVTLSLLFNAAFWWYLV. At 65–89 the chain is on the periplasmic side; the sequence is QTEGRAVADPQALAFLTGYLIEKSL. The chain crosses the membrane as a helical span at residues 90 to 110; that stretch reads AVDNVFVWLMLFSYFSVPAAL. At 111–113 the chain is on the cytoplasmic side; that stretch reads QRR. Residues 114–134 form a helical membrane-spanning segment; that stretch reads VLVYGVLGAIVLRTIMIFTGS. A topological domain (periplasmic) is located at residue tryptophan 135. Residues 136–156 traverse the membrane as a helical segment; sequence LISQFDWILYIFGAFLLFTGV. Residues 157–198 are Cytoplasmic-facing; the sequence is KMALAHEDESGIGDKPLVRWLRGHLRMTDTIDNEHFFVRKNG. The helical transmembrane segment at 199–219 threads the bilayer; that stretch reads LLYATPLMLVLILVELSDVIF. Over 220–225 the chain is Periplasmic; it reads AVDSIP. A helical membrane pass occupies residues 226-246; it reads AIFAVTTDPFIVLTSNLFAIL. Residues 247–261 are Cytoplasmic-facing; that stretch reads GLRAMYFLLAGVAER. Residues 262-282 form a helical membrane-spanning segment; that stretch reads FSMLKYGLAVILVFIGIKMLI. At 283-286 the chain is on the periplasmic side; sequence VDFY. The chain crosses the membrane as a helical span at residues 287–307; that stretch reads HIPIAVSLGVVFGILVMTFII. Residues 308–321 are Cytoplasmic-facing; the sequence is NAWVNYRHDKQRGG.

Belongs to the TerC family.

Its subcellular location is the cell inner membrane. Its function is as follows. Has been proposed to be a redox modulator. This chain is Putative membrane-bound redox modulator Alx, found in Escherichia coli (strain K12).